Reading from the N-terminus, the 897-residue chain is Cytokine receptor common subunit beta (897 aa).

The signal sequence occupies residues 1 to 16; it reads MVLAQGLLSMALLALC. Residues 17 to 443 lie on the Extracellular side of the membrane; it reads WERSLAGAEE…WDTESVLPMW (427 aa). A disulfide bond links C35 and C45. The N-linked (GlcNAc...) asparagine glycan is linked to N58. Intrachain disulfides connect C75–C96 and C86–C91. The region spanning 133 to 240 is the Fibronectin type-III 1 domain; it reads PPEPRDLQIS…PEVCWDSQPG (108 aa). N-linked (GlcNAc...) asparagine glycosylation is present at N191. Cystine bridges form between C250/C260 and C289/C306. Positions 339–436 constitute a Fibronectin type-III 2 domain; sequence QMAPPSLNVT…EWSEARSWDT (98 aa). N346 carries an N-linked (GlcNAc...) asparagine glycan. The WSXWS motif motif lies at 425–429; that stretch reads WSEWS. The chain crosses the membrane as a helical span at residues 444 to 460; the sequence is VLALIVIFLTIAVLLAL. Over 461–897 the chain is Cytoplasmic; the sequence is RFCGIYGYRL…WEVNKPGEVC (437 aa). The Box 1 motif signature appears at 474 to 482; that stretch reads WEEKIPNPS. Disordered stretches follow at residues 498-517, 532-630, 648-812, and 830-849; these read GSMS…WGSR, SEVS…EYLC, PGQA…QPEG, and PGPL…PEIK. Residues 564-574 are compositionally biased toward pro residues; the sequence is EQPPSPQPGPP. Over residues 723–752 the composition is skewed to low complexity; it reads SGASSVSLVPSLGLPSDQTPSLCPGLASGP. A Phosphotyrosine modification is found at Y766. Residues 830-840 show a composition bias toward low complexity; sequence PGPLSLRSKPS.

This sequence belongs to the type I cytokine receptor family. Type 4 subfamily. In terms of assembly, heterodimer of an alpha and a beta subunit. The beta subunit is common to the IL3, IL5 and GM-CSF receptors. The signaling GM-CSF receptor complex is a dodecamer of two head-to-head hexamers of two alpha, two beta, and two ligand subunits. Interacts with TMEM102; this interaction occurs preferentially in the absence of CSF2. Interacts with FCER1G; this interaction is direct. Interacts with LYN. Interacts with JAK1. In terms of processing, may be phosphorylated by LYN.

It localises to the membrane. In terms of biological role, cell surface receptor that plays a role in immune response and controls the production and differentiation of hematopoietic progenitor cells into lineage-restricted cells. Acts by forming an heterodimeric receptor through interaction with different partners such as IL3RA, IL5RA or CSF2RA. In turn, participates in various signaling pathways including interleukin-3, interleukin-5 and granulocyte-macrophage colony-stimulating factor/CSF2 pathways. In unstimulated conditions, interacts constitutively with JAK1 and ligand binding leads to JAK1 stimulation and subsequent activation of the JAK-STAT pathway. In Homo sapiens (Human), this protein is Cytokine receptor common subunit beta (CSF2RB).